A 372-amino-acid chain; its full sequence is Putative aminopeptidase SgcX (372 aa).

The a divalent metal cation site is built by His-67 and Asp-180. Glu-212 functions as the Proton acceptor in the catalytic mechanism. A divalent metal cation contacts are provided by Glu-213, Asp-235, and His-329.

It belongs to the peptidase M42 family. It depends on a divalent metal cation as a cofactor.

The protein is Putative aminopeptidase SgcX (sgcX) of Salmonella typhi.